The following is a 143-amino-acid chain: Peptide methionine sulfoxide reductase MsrB (143 aa).

One can recognise a MsrB domain in the interval 16–139 (DAELRRRLTP…NSAALNFEAK (124 aa)). Zn(2+) is bound by residues cysteine 55, cysteine 58, cysteine 104, and cysteine 107. Cysteine 128 functions as the Nucleophile in the catalytic mechanism.

Belongs to the MsrB Met sulfoxide reductase family. The cofactor is Zn(2+).

It catalyses the reaction L-methionyl-[protein] + [thioredoxin]-disulfide + H2O = L-methionyl-(R)-S-oxide-[protein] + [thioredoxin]-dithiol. In Burkholderia thailandensis (strain ATCC 700388 / DSM 13276 / CCUG 48851 / CIP 106301 / E264), this protein is Peptide methionine sulfoxide reductase MsrB.